Consider the following 383-residue polypeptide: Deoxyguanosinetriphosphate triphosphohydrolase-like protein (383 aa).

Positions 62-198 (RLTHSLEVST…AALADDISYI (137 aa)) constitute an HD domain.

It belongs to the dGTPase family. Type 2 subfamily.

This chain is Deoxyguanosinetriphosphate triphosphohydrolase-like protein, found in Rickettsia bellii (strain RML369-C).